The sequence spans 1397 residues: Protein RhsC (1397 aa).

Tandem repeats lie at residues 330–352, 353–374, 375–417, 418–438, 439–460, 461–481, 482–502, 503–525, 526–546, 547–567, 568–588, 589–609, 610–629, 630–650, 651–671, 672–691, 692–711, 712–734, 735–758, 808–828, 829–850, 851–871, 872–894, 895–930, 931–959, 960–984, 985–1019, and 1162–1186. A 28 X approximate tandem repeats region spans residues 330-1186; it reads NTQVRSFTYD…LNEENPHQLQ (857 aa). The segment at 1292–1312 is disordered; that stretch reads GGQDQRGESKGDGLWGPGKAS.

It belongs to the RHS family.

In terms of biological role, rhs elements have a nonessential function. They may play an important role in the natural ecology of the cell. This chain is Protein RhsC (rhsC), found in Escherichia coli (strain K12).